The sequence spans 676 residues: Cysteine-rich receptor-like protein kinase 8 (676 aa).

The N-terminal stretch at 1 to 34 (MYIVSMFGLAGLEALICFIFLFLFSFLTSFKASA) is a signal peptide. At 35–291 (QNPFYLNHDC…IPGKSGNSTV (257 aa)) the chain is on the extracellular side. Gnk2-homologous domains lie at 38-142 (FYLN…HKNF) and 151-255 (ELIM…LYAF). 8 N-linked (GlcNAc...) asparagine glycosylation sites follow: asparagine 46, asparagine 53, asparagine 71, asparagine 114, asparagine 159, asparagine 187, asparagine 257, and asparagine 288. Residues 292-312 (LVVAIVVLAVLLFIALVGYCF) form a helical membrane-spanning segment. Topologically, residues 313–676 (LAQRTKKTFD…DELITDLYPR (364 aa)) are cytoplasmic. The region spanning 353 to 639 (FAESNKIGRG…TLPVPRQPGF (287 aa)) is the Protein kinase domain. ATP contacts are provided by residues 359–367 (IGRGGFGEV) and lysine 381. The residue at position 426 (tyrosine 426) is a Phosphotyrosine. Residue aspartate 478 is the Proton acceptor of the active site. Serine 482 carries the phosphoserine modification. Threonine 518 is modified (phosphothreonine). Tyrosine 526 is subject to Phosphotyrosine. Positions 640 to 666 (FIQSSPVKDPTDSDQSTTTKSTPASID) are disordered. Low complexity predominate over residues 652–662 (SDQSTTTKSTP).

The protein belongs to the protein kinase superfamily. Ser/Thr protein kinase family. CRK subfamily.

Its subcellular location is the membrane. The enzyme catalyses L-seryl-[protein] + ATP = O-phospho-L-seryl-[protein] + ADP + H(+). The catalysed reaction is L-threonyl-[protein] + ATP = O-phospho-L-threonyl-[protein] + ADP + H(+). The protein is Cysteine-rich receptor-like protein kinase 8 (CRK8) of Arabidopsis thaliana (Mouse-ear cress).